The following is a 243-amino-acid chain: Protein-L-isoaspartate O-methyltransferase 2 (243 aa).

The interval 21–42 is disordered; sequence DACADRGHPSAERSTPETERRR. Over residues 23–42 the composition is skewed to basic and acidic residues; sequence CADRGHPSAERSTPETERRR. S94 is a catalytic residue.

This sequence belongs to the methyltransferase superfamily. L-isoaspartyl/D-aspartyl protein methyltransferase family.

The protein resides in the cytoplasm. The enzyme catalyses [protein]-L-isoaspartate + S-adenosyl-L-methionine = [protein]-L-isoaspartate alpha-methyl ester + S-adenosyl-L-homocysteine. Functionally, catalyzes the methyl esterification of L-isoaspartyl residues in peptides and proteins that result from spontaneous decomposition of normal L-aspartyl and L-asparaginyl residues. It plays a role in the repair and/or degradation of damaged proteins. The sequence is that of Protein-L-isoaspartate O-methyltransferase 2 from Anaeromyxobacter sp. (strain Fw109-5).